A 500-amino-acid chain; its full sequence is Nucleolar and spindle-associated protein 1 (500 aa).

Disordered stretches follow at residues 48–204 (KNET…NFKK), 241–299 (TKKS…ASKS), 319–353 (VRFSEATKDNEHKRSLIKTPARKSSSFLAVTPESE), and 365–500 (ELLP…VPVK). Residues 82 to 92 (THRRGRGRKPI) are compositionally biased toward basic residues. A compositionally biased stretch (polar residues) spans 113–127 (NMASSIDRTQQQNCT). The segment covering 264 to 274 (SRLSLLSPLPR) has biased composition (low complexity). The span at 276–298 (TGASPSRTPMSQRRSCRSSTASK) shows a compositional bias: polar residues. Positions 323 to 332 (EATKDNEHKR) are enriched in basic and acidic residues. Positions 380 to 392 (ITLNTTTQPSPAT) are enriched in polar residues. The segment covering 442-451 (PWGESKENKP) has biased composition (basic and acidic residues). Residues 452–469 (DPNSNVSVLKNNYKQPHL) are compositionally biased toward polar residues.

Belongs to the NUSAP family. As to quaternary structure, interacts with DNA, microtubules, ipo7, kpna2 and kpnb1. Microtubule stabilization is inhibited by ipo7 and kpna2, while microtubule bundling is inhibited by kpnb1. Active GTP-bound ran causes dissociation of ipo7 and kpnb1.

It localises to the cytoplasm. The protein localises to the nucleus. It is found in the cytoskeleton. Its subcellular location is the spindle. Functionally, microtubule-associated protein with the capacity to bundle and stabilize microtubules. May associate with chromosomes and promote the organization of meiotic or mitotic spindle microtubules around them. This Xenopus tropicalis (Western clawed frog) protein is Nucleolar and spindle-associated protein 1 (nusap1).